A 291-amino-acid polypeptide reads, in one-letter code: Putative phosphatase MG263 (291 aa).

The Nucleophile role is filled by D11. Residue D11 coordinates Mg(2+). L12 serves as a coordination point for phosphate. D13 provides a ligand contact to Mg(2+). Phosphate contacts are provided by residues 60–61 (TG) and K217. D241 contacts Mg(2+). N244 lines the phosphate pocket.

It belongs to the HAD-like hydrolase superfamily. Cof family. Mg(2+) serves as cofactor.

The polypeptide is Putative phosphatase MG263 (Mycoplasma genitalium (strain ATCC 33530 / DSM 19775 / NCTC 10195 / G37) (Mycoplasmoides genitalium)).